The sequence spans 330 residues: Type II methyltransferase M.HaeIII (330 aa).

One can recognise an SAM-dependent MTase C5-type domain in the interval 1-327 (MNLISLFSGA…KTIKSALEIC (327 aa)). Residues glutamate 29 and 50 to 51 (DI) each bind ATP. Cysteine 71 is a catalytic residue. Asparagine 260 lines the ATP pocket.

Belongs to the class I-like SAM-binding methyltransferase superfamily. C5-methyltransferase family. Monomer.

The catalysed reaction is a 2'-deoxycytidine in DNA + S-adenosyl-L-methionine = a 5-methyl-2'-deoxycytidine in DNA + S-adenosyl-L-homocysteine + H(+). A methylase, recognizes the double-stranded sequence 5'-GGCC-3', methylates C-3 on both strands, and protects the DNA from cleavage by the HaeIII endonuclease. The sequence is that of Type II methyltransferase M.HaeIII (haeIIIM) from Haemophilus aegyptius.